A 352-amino-acid chain; its full sequence is Guanine nucleotide-binding protein alpha-7 subunit (352 aa).

Glycine 2 carries N-myristoyl glycine lipidation. Cysteine 4 is lipidated: S-palmitoyl cysteine. In terms of domain architecture, G-alpha spans 32–352 (RIIKLLLLGA…AKNLKSMGLC (321 aa)). The segment at 35 to 48 (KLLLLGAGESGKST) is G1 motif. Residues 40 to 47 (GAGESGKS), 174 to 180 (LRTRIKT), 199 to 203 (DVGGQ), 268 to 271 (NKKD), and alanine 324 each bind GTP. Positions 47 and 180 each coordinate Mg(2+). The segment at 172-180 (DLLRTRIKT) is G2 motif. The segment at 195-204 (FRVIDVGGQR) is G3 motif. Positions 264–271 (ILFLNKKD) are G4 motif. A G5 motif region spans residues 322-327 (TCATDT).

Belongs to the G-alpha family. G(i/o/t/z) subfamily. G proteins are composed of 3 units; alpha, beta and gamma. The alpha chain contains the guanine nucleotide binding site.

In terms of biological role, guanine nucleotide-binding proteins (G proteins) are involved as modulators or transducers in various transmembrane signaling systems. The chain is Guanine nucleotide-binding protein alpha-7 subunit (gpa-7) from Caenorhabditis elegans.